Reading from the N-terminus, the 142-residue chain is Hemoglobin subunit beta-2 (142 aa).

One can recognise a Globin domain in the interval 2–142; it reads SLTDEEKHLI…VTEALSCQYH (141 aa). Residues histidine 59 and histidine 88 each coordinate heme b.

It belongs to the globin family. As to quaternary structure, heterotetramer of two alpha chains and two beta chains. Red blood cells.

In terms of biological role, involved in oxygen transport from the lung to the various peripheral tissues. This Torpedo marmorata (Marbled electric ray) protein is Hemoglobin subunit beta-2 (HBB2).